Here is a 53-residue protein sequence, read N- to C-terminus: Rubredoxin (53 aa).

Positions 1–53 constitute a Rubredoxin-like domain; that stretch reads MQKYVCDICGYVYDPAVGDPDNGVAPGTAFADLPEDWVCPECGVSKDEFSPEA. Fe cation contacts are provided by cysteine 6, cysteine 9, cysteine 39, and cysteine 42.

The protein belongs to the rubredoxin family. It depends on Fe(3+) as a cofactor.

Functionally, rubredoxin is a small nonheme, iron protein lacking acid-labile sulfide. Its single Fe, chelated to 4 Cys, functions as an electron acceptor and may also stabilize the conformation of the molecule. The sequence is that of Rubredoxin from Butyribacterium methylotrophicum.